The chain runs to 453 residues: tRNA-2-methylthio-N(6)-dimethylallyladenosine synthase (453 aa).

Residues 11–131 enclose the MTTase N-terminal domain; sequence KSFHVKSFGC…LPQLVADAAE (121 aa). The [4Fe-4S] cluster site is built by cysteine 20, cysteine 56, cysteine 94, cysteine 167, cysteine 171, and cysteine 174. The region spanning 153-385 is the Radical SAM core domain; that stretch reads RRQGPTAFLT…QALLNEQQHR (233 aa). Residues 388-449 form the TRAM domain; it reads LATVGKRCEV…PNSLSGALVE (62 aa).

It belongs to the methylthiotransferase family. MiaB subfamily. As to quaternary structure, monomer. Requires [4Fe-4S] cluster as cofactor.

The protein localises to the cytoplasm. It carries out the reaction N(6)-dimethylallyladenosine(37) in tRNA + (sulfur carrier)-SH + AH2 + 2 S-adenosyl-L-methionine = 2-methylsulfanyl-N(6)-dimethylallyladenosine(37) in tRNA + (sulfur carrier)-H + 5'-deoxyadenosine + L-methionine + A + S-adenosyl-L-homocysteine + 2 H(+). In terms of biological role, catalyzes the methylthiolation of N6-(dimethylallyl)adenosine (i(6)A), leading to the formation of 2-methylthio-N6-(dimethylallyl)adenosine (ms(2)i(6)A) at position 37 in tRNAs that read codons beginning with uridine. This chain is tRNA-2-methylthio-N(6)-dimethylallyladenosine synthase, found in Rhizorhabdus wittichii (strain DSM 6014 / CCUG 31198 / JCM 15750 / NBRC 105917 / EY 4224 / RW1) (Sphingomonas wittichii).